The following is a 137-amino-acid chain: ATP synthase epsilon chain, chloroplastic (137 aa).

It belongs to the ATPase epsilon chain family. F-type ATPases have 2 components, CF(1) - the catalytic core - and CF(0) - the membrane proton channel. CF(1) has five subunits: alpha(3), beta(3), gamma(1), delta(1), epsilon(1). CF(0) has three main subunits: a, b and c.

The protein resides in the plastid. It localises to the chloroplast thylakoid membrane. Functionally, produces ATP from ADP in the presence of a proton gradient across the membrane. The polypeptide is ATP synthase epsilon chain, chloroplastic (Pisum sativum (Garden pea)).